The chain runs to 334 residues: 3-ketodihydrosphingosine reductase (334 aa).

The first 20 residues, M1 to K20, serve as a signal peptide directing secretion. 8 residues coordinate NADPH: G36, S38, S39, G40, R62, K66, D100, and I101. Residues G36–G40 carry the GXSXG motif. S182 functions as the Proton donor in the catalytic mechanism. Y196 acts as the Proton acceptor in catalysis. NADP(+) is bound by residues Y196 and K200. K200 acts as the Lowers pKa of active site Tyr in catalysis.

Belongs to the short-chain dehydrogenases/reductases (SDR) family.

The protein localises to the endoplasmic reticulum. It carries out the reaction sphinganine + NADP(+) = 3-oxosphinganine + NADPH + H(+). It participates in lipid metabolism; sphingolipid metabolism. Functionally, catalyzes the reduction of 3'-oxosphinganine (3-ketodihydrosphingosine/KDS) to sphinganine (dihydrosphingosine/DHS), the second step of de novo sphingolipid biosynthesis. In Dictyostelium discoideum (Social amoeba), this protein is 3-ketodihydrosphingosine reductase (ksrA-1).